A 309-amino-acid polypeptide reads, in one-letter code: uncharacterized protein (309 aa).

Residues 23 to 43 traverse the membrane as a helical segment; it reads ALVLSSIVNILLLLLIYSTVF.

The protein belongs to the chlamydial CPn_0593/CT_474/TC_0759 family.

Its subcellular location is the membrane. This is an uncharacterized protein from Chlamydia trachomatis serovar D (strain ATCC VR-885 / DSM 19411 / UW-3/Cx).